A 216-amino-acid polypeptide reads, in one-letter code: uncharacterized protein (216 aa).

Positions 55-216 (NEDKAEAMSN…NEKEKDVNPK (162 aa)) are disordered. Basic and acidic residues-rich tracts occupy residues 134–152 (LTEK…DNHV), 177–187 (KINDKSDDTLH), and 207–216 (NEKEKDVNPK).

This is an uncharacterized protein from Caenorhabditis elegans.